A 444-amino-acid chain; its full sequence is tRNA modification GTPase MnmE (444 aa).

Positions 23, 82, and 121 each coordinate (6S)-5-formyl-5,6,7,8-tetrahydrofolate. The 150-residue stretch at 216–365 (GTSIVLAGLP…LKQALQKWLN (150 aa)) folds into the TrmE-type G domain. Asn-226 is a binding site for K(+). Residues 226 to 231 (NAGKSS), 245 to 251 (TDIPGTT), and 270 to 273 (DSAG) contribute to the GTP site. Ser-230 provides a ligand contact to Mg(2+). Thr-245, Ile-247, and Thr-250 together coordinate K(+). Position 251 (Thr-251) interacts with Mg(2+). Lys-444 serves as a coordination point for (6S)-5-formyl-5,6,7,8-tetrahydrofolate.

Belongs to the TRAFAC class TrmE-Era-EngA-EngB-Septin-like GTPase superfamily. TrmE GTPase family. As to quaternary structure, homodimer. Heterotetramer of two MnmE and two MnmG subunits. K(+) serves as cofactor.

It is found in the cytoplasm. Exhibits a very high intrinsic GTPase hydrolysis rate. Involved in the addition of a carboxymethylaminomethyl (cmnm) group at the wobble position (U34) of certain tRNAs, forming tRNA-cmnm(5)s(2)U34. In Chlamydia trachomatis serovar L2 (strain ATCC VR-902B / DSM 19102 / 434/Bu), this protein is tRNA modification GTPase MnmE.